A 563-amino-acid polypeptide reads, in one-letter code: Tripeptidyl-peptidase 1 (563 aa).

The first 19 residues, 1–19 (MGLQARFLGLLALVIAGKC), serve as a signal peptide directing secretion. Residues 20 to 195 (THSPEPDQRW…PEPQGVGPVG (176 aa)) constitute a propeptide, removed in mature form. C111 and C122 are disulfide-bonded. Residues 199-563 (GVTPSVLRQR…PALLKTLLNP (365 aa)) form the Peptidase S53 domain. Residues N210 and N222 are each glycosylated (N-linked (GlcNAc...) asparagine). Active-site charge relay system residues include E272 and D276. N-linked (GlcNAc...) asparagine glycans are attached at residues N286, N313, and N443. 2 cysteine pairs are disulfide-bonded: C365–C526 and C522–C537. The active-site Charge relay system is the S475. Residues D517 and V518 each contribute to the Ca(2+) site. 3 residues coordinate Ca(2+): G539, G541, and D543.

In terms of assembly, monomer. Interacts with CLN5. Interacts with CLN3. Ca(2+) serves as cofactor. Activated by autocatalytic proteolytical processing upon acidification. N-glycosylation is required for processing and activity.

The protein resides in the lysosome. Its subcellular location is the melanosome. The catalysed reaction is Release of an N-terminal tripeptide from a polypeptide, but also has endopeptidase activity.. Functionally, lysosomal serine protease with tripeptidyl-peptidase I activity. May act as a non-specific lysosomal peptidase which generates tripeptides from the breakdown products produced by lysosomal proteinases. Requires substrates with an unsubstituted N-terminus. The protein is Tripeptidyl-peptidase 1 (Tpp1) of Rattus norvegicus (Rat).